The following is a 465-amino-acid chain: Ribulose bisphosphate carboxylase large chain (465 aa).

Position 4 is an N6,N6,N6-trimethyllysine (lysine 4). Residues asparagine 113 and threonine 163 each contribute to the substrate site. The Proton acceptor role is filled by lysine 165. Lysine 167 lines the substrate pocket. Mg(2+)-binding residues include lysine 191, aspartate 193, and glutamate 194. At lysine 191 the chain carries N6-carboxylysine. The active-site Proton acceptor is the histidine 284. Positions 285, 317, and 369 each coordinate substrate.

It belongs to the RuBisCO large chain family. Type I subfamily. Heterohexadecamer of 8 large chains and 8 small chains; disulfide-linked. The disulfide link is formed within the large subunit homodimers. It depends on Mg(2+) as a cofactor. In terms of processing, the disulfide bond which can form in the large chain dimeric partners within the hexadecamer appears to be associated with oxidative stress and protein turnover.

It is found in the plastid. The protein localises to the chloroplast. It catalyses the reaction 2 (2R)-3-phosphoglycerate + 2 H(+) = D-ribulose 1,5-bisphosphate + CO2 + H2O. It carries out the reaction D-ribulose 1,5-bisphosphate + O2 = 2-phosphoglycolate + (2R)-3-phosphoglycerate + 2 H(+). RuBisCO catalyzes two reactions: the carboxylation of D-ribulose 1,5-bisphosphate, the primary event in carbon dioxide fixation, as well as the oxidative fragmentation of the pentose substrate in the photorespiration process. Both reactions occur simultaneously and in competition at the same active site. The polypeptide is Ribulose bisphosphate carboxylase large chain (Byrsonima crassifolia (Cajuil cimarron)).